Here is a 196-residue protein sequence, read N- to C-terminus: Protein kinase OspG (196 aa).

It belongs to the protein kinase superfamily. Autophosphorylated.

It is found in the secreted. The protein resides in the host cell. Its function is as follows. Effector proteins function to alter host cell physiology and promote bacterial survival in host tissues. This protein is a kinase that is involved in down-regulation of the host innate response induced by invasive bacteria. In Shigella flexneri serotype X (strain 2002017), this protein is Protein kinase OspG (ospG).